Here is a 241-residue protein sequence, read N- to C-terminus: Glutathione S-transferase omega-1 (241 aa).

Position 2 is an N-acetylserine (S2). Residues 22 to 101 enclose the GST N-terminal domain; it reads GSIRIYSMRF…YLDEAYPGKK (80 aa). The active-site Nucleophile is the C32. N6-acetyllysine is present on K57. Residues K59, V72, and 85–86 contribute to the glutathione site; that span reads ES. The region spanning 106-230 is the GST C-terminal domain; it reads DPYEKACQKM…DWQGFLELYL (125 aa). S129 carries the phosphoserine modification. Residues K143, K148, and K152 each carry the N6-acetyllysine modification.

Belongs to the GST superfamily. Omega family. As to quaternary structure, homodimer. In terms of tissue distribution, ubiquitous. Highest expression in liver, pancreas, skeletal muscle, spleen, thymus, colon, blood leukocyte and heart. Lowest expression in brain, placenta and lung.

The protein resides in the cytoplasm. Its subcellular location is the cytosol. It carries out the reaction RX + glutathione = an S-substituted glutathione + a halide anion + H(+). The enzyme catalyses L-dehydroascorbate + 2 glutathione = glutathione disulfide + L-ascorbate. The catalysed reaction is methylarsonate + 2 glutathione + H(+) = methylarsonous acid + glutathione disulfide + H2O. With respect to regulation, monomethylarsonic acid reductase activity is competitively inhibited by 1-chloro 2,4-dinitrobenzene (CDNB) and by deoxycholate. In terms of biological role, exhibits glutathione-dependent thiol transferase and dehydroascorbate reductase activities. Has S-(phenacyl)glutathione reductase activity. Also has glutathione S-transferase activity. Participates in the biotransformation of inorganic arsenic and reduces monomethylarsonic acid (MMA) and dimethylarsonic acid. This chain is Glutathione S-transferase omega-1 (GSTO1), found in Homo sapiens (Human).